The following is a 137-amino-acid chain: Major seminal plasma glycoprotein PSP-II (137 aa).

The first 21 residues, 1–21, serve as a signal peptide directing secretion; the sequence is MKLGTAIPWALLLSTATLVST. Disulfide bonds link cysteine 30–cysteine 51 and cysteine 74–cysteine 95. The 102-residue stretch at 30–131 folds into the CUB domain; it reads CGRVIKDTSG…SPFLIYFYGS (102 aa). Residue asparagine 119 is glycosylated (N-linked (GlcNAc...) (complex) asparagine).

As to quaternary structure, monomer or heterodimer with PSP-I (depending on the type of glycosylation of PSP-I). As to expression, seminal plasma or sperm.

It is found in the secreted. In Sus scrofa (Pig), this protein is Major seminal plasma glycoprotein PSP-II.